The primary structure comprises 646 residues: Peptidylprolyl isomerase domain and WD repeat-containing protein 1 (646 aa).

The disordered stretch occupies residues 1–50; it reads MATESGSDSQLRRRRRRDPEGSEKTELSEREPALAVAGSEENDDENEERW. Ala2 carries the post-translational modification N-acetylalanine. Over residues 17–32 the composition is skewed to basic and acidic residues; that stretch reads RDPEGSEKTELSEREP. WD repeat units follow at residues 88 to 126, 131 to 170, 221 to 260, and 278 to 319; these read MHRDVITHVVCTKTDFIITASHDGHVKFWKKIEEGIEFV, SHLGVIESIAVSSEGALFCSVGDDKAMKVFDVVNFDMINM, LHVSPLTQIRLNPVYKAVVSSDKSGMIEYWTGPPHEYKFP, and KCKA…RVFD. Residues 490-645 enclose the PPIase cyclophilin-type domain; it reads VSDSAIVHTS…EDVSIINITV (156 aa).

This sequence belongs to the cyclophilin-type PPIase family. PPIL1 subfamily. In terms of assembly, identified in the spliceosome C complex.

It localises to the nucleus. It catalyses the reaction [protein]-peptidylproline (omega=180) = [protein]-peptidylproline (omega=0). Inhibited by cyclosporin A (CsA). Its function is as follows. PPIase that catalyzes the cis-trans isomerization of proline imidic peptide bonds in oligopeptides and may therefore assist protein folding. May be involved in pre-mRNA splicing. This Mus musculus (Mouse) protein is Peptidylprolyl isomerase domain and WD repeat-containing protein 1.